A 412-amino-acid chain; its full sequence is cAMP-dependent protein kinase regulatory subunit (412 aa).

Residues 1 to 142 (MSFEEVYEEL…RLKRSVAGNF (142 aa)) are dimerization and phosphorylation. The Pseudophosphorylation motif signature appears at 101-105 (RRQSV). At S104 the chain carries Phosphoserine. 3',5'-cyclic AMP is bound by residues 143 to 277 (LFKN…EEVP), E224, R233, 278 to 412 (ILSS…STKA), E344, and R353. Residues 392 to 412 (MGMDNEYGDQSLHRSPPSTKA) form a disordered region.

This sequence belongs to the cAMP-dependent kinase regulatory chain family. Tetramer, composed of 2 regulatory (R) and 2 catalytic (C) subunits. In the presence of cAMP it dissociates into 2 active monomeric C subunits and an R dimer.

The sequence is that of cAMP-dependent protein kinase regulatory subunit (cgs1) from Schizosaccharomyces pombe (strain 972 / ATCC 24843) (Fission yeast).